The primary structure comprises 74 residues: Toxin Td6 (74 aa).

Positions 1–8 (IGMIVECE) are cleaved as a signal peptide. The region spanning 9–71 (KEGYLMEANG…IWDSATNTCG (63 aa)) is the LCN-type CS-alpha/beta domain. 4 disulfides stabilise this stretch: C19–C70, C23–C45, C31–C51, and C35–C53. R72 carries the post-translational modification Arginine amide.

It belongs to the long (4 C-C) scorpion toxin superfamily. Sodium channel inhibitor family. Beta subfamily. Expressed by the venom gland.

Its subcellular location is the secreted. Its function is as follows. Beta toxins bind voltage-independently at site-4 of sodium channels (Nav) and shift the voltage of activation toward more negative potentials thereby affecting sodium channel activation and promoting spontaneous and repetitive firing. This chain is Toxin Td6, found in Tityus discrepans (Venezuelan scorpion).